An 84-amino-acid polypeptide reads, in one-letter code: Large ribosomal subunit protein uL23 (84 aa).

This sequence belongs to the universal ribosomal protein uL23 family. As to quaternary structure, part of the 50S ribosomal subunit. Contacts protein L29.

Its function is as follows. Binds to 23S rRNA. One of the proteins that surrounds the polypeptide exit tunnel on the outside of the ribosome. This is Large ribosomal subunit protein uL23 from Halobacterium salinarum (strain ATCC 700922 / JCM 11081 / NRC-1) (Halobacterium halobium).